We begin with the raw amino-acid sequence, 521 residues long: Type-2 serine--tRNA ligase (521 aa).

Residue A316 coordinates L-serine. C318 contributes to the Zn(2+) binding site. L-serine is bound at residue R347. ATP-binding positions include 347–349 (RWE) and 358–359 (RV). An L-serine-binding site is contributed by 364 to 366 (RVE). Positions 366 and 473 each coordinate Zn(2+). R480 is a binding site for ATP.

The protein belongs to the class-II aminoacyl-tRNA synthetase family. Type-2 seryl-tRNA synthetase subfamily. As to quaternary structure, homodimer. Zn(2+) serves as cofactor.

It is found in the cytoplasm. The enzyme catalyses tRNA(Ser) + L-serine + ATP = L-seryl-tRNA(Ser) + AMP + diphosphate + H(+). It catalyses the reaction tRNA(Sec) + L-serine + ATP = L-seryl-tRNA(Sec) + AMP + diphosphate + H(+). It participates in aminoacyl-tRNA biosynthesis; selenocysteinyl-tRNA(Sec) biosynthesis; L-seryl-tRNA(Sec) from L-serine and tRNA(Sec): step 1/1. Catalyzes the attachment of serine to tRNA(Ser). Is also able to aminoacylate tRNA(Sec) with serine, to form the misacylated tRNA L-seryl-tRNA(Sec), which will be further converted into selenocysteinyl-tRNA(Sec). This Methanocaldococcus jannaschii (strain ATCC 43067 / DSM 2661 / JAL-1 / JCM 10045 / NBRC 100440) (Methanococcus jannaschii) protein is Type-2 serine--tRNA ligase (serS).